The chain runs to 581 residues: Potassium-transporting ATPase potassium-binding subunit (581 aa).

The next 12 membrane-spanning stretches (helical) occupy residues 2 to 22, 74 to 94, 135 to 155, 177 to 197, 255 to 275, 284 to 304, 332 to 352, 357 to 377, 381 to 401, 421 to 441, 501 to 521, and 550 to 570; these read LQGWIQIALTILIIVAITPFF, AVIAILVFSLIAGQGVLPLNP, GLGYQMFTSAGTGLAVGIAFI, ILLPISIVGAIALIIAGVPET, LVQLVAILSIPTSLIYTYGVF, LIYLIPLGIFIGFTIITAIGE, WAQSALYAVTTTATMCGAVIA, LMPNGGFATLSNLFLQIVFGG, GTAYLFAYLILAVFVTGLMVG, FLILLVHPIAILIPGAIALAF, LSACFSLLAGRYIPIAALLLL, and AGVILILGALTFLPILALGPI.

This sequence belongs to the KdpA family. As to quaternary structure, the system is composed of three essential subunits: KdpA, KdpB and KdpC.

The protein resides in the cell inner membrane. Functionally, part of the high-affinity ATP-driven potassium transport (or Kdp) system, which catalyzes the hydrolysis of ATP coupled with the electrogenic transport of potassium into the cytoplasm. This subunit binds the periplasmic potassium ions and delivers the ions to the membrane domain of KdpB through an intramembrane tunnel. This Microcystis aeruginosa (strain NIES-843 / IAM M-2473) protein is Potassium-transporting ATPase potassium-binding subunit.